The sequence spans 513 residues: MEGRGFSGLYKNSSEELFLKTVMESPIGMPVPTMEMLGFKTVSQSFRADSEELFKRWLTNEEGYNSTSMGLNSRLSKRISTELVNVSNQQHVGVASEGRNNDKSCLQNSFLTNDVSGDFNFPIREPVDRELQSGNLFLAKAWFLTDQRMTRSRSSELRRRYTEMQNTQAPQGLDSMFMAPKHDANIIKEELAHFNGFDYLSMCEIPSQKGSFMSPSNSSSSTFNTQQLVDVDKVSSCVSMLKGTLQRKRLECQVEKDAAEDGLNEIFGIREPLFQSGFNEGQENWNHQKLVNVQGDFTDQVKDTGVIETLEGAANFVLEGFANQTSQIHGGTASGEPSQSESSAAAPVISSGLDACEGPSNSSQTLCDSSWKQVGESTQNRAKGVREQIMDNLKDDRKRKRLERYGSVTSAVSDDKVDTTKKRRVERSRKMAEAKERNLTPTIPSDMQAVMKRCENLEKEVRSLKLNLSFMNRKDSEQTKQIEDLQKQNEELADEKERLLEEIERLLSETGKI.

A disordered region spans residues 327-435 (QIHGGTASGE…ERSRKMAEAK (109 aa)). Residues 334 to 347 (SGEPSQSESSAAAP) show a composition bias toward low complexity. Residues 359 to 381 (PSNSSQTLCDSSWKQVGESTQNR) are compositionally biased toward polar residues. Residues 384-396 (GVREQIMDNLKDD) are compositionally biased toward basic and acidic residues. Short sequence motifs (nuclear localization signal) lie at residues 397 to 401 (RKRKR) and 421 to 424 (KKRR). Residues 447 to 513 (MQAVMKRCEN…ERLLSETGKI (67 aa)) adopt a coiled-coil conformation.

It belongs to the CYCLOPS family.

Its subcellular location is the nucleus. Involved symbiotic signaling. Required for root infection by symbiotic rhizobia, infection thread (IT) formation, and nodule development. Required for symbiosome formation (i.e. the release of the bacteria from the ITs) and subsequent symbiosome development. Involved in arbuscular mycorrhizal (AM) symbiosis. In Pisum sativum (Garden pea), this protein is Protein CYCLOPS.